We begin with the raw amino-acid sequence, 514 residues long: 1-pyrroline-5-carboxylate dehydrogenase (514 aa).

Catalysis depends on residues Glu-286 and Cys-320.

Belongs to the aldehyde dehydrogenase family. RocA subfamily.

It catalyses the reaction L-glutamate 5-semialdehyde + NAD(+) + H2O = L-glutamate + NADH + 2 H(+). It participates in amino-acid degradation; L-proline degradation into L-glutamate; L-glutamate from L-proline: step 2/2. This Staphylococcus epidermidis (strain ATCC 12228 / FDA PCI 1200) protein is 1-pyrroline-5-carboxylate dehydrogenase.